Reading from the N-terminus, the 208-residue chain is Receptor expression-enhancing protein 6 (208 aa).

3 consecutive transmembrane segments (helical) span residues 49-69, 93-113, and 115-135; these read GAFL…GFVY, WVIY…LHWF, and FYYV…SWNG. Residues 187 to 208 form a disordered region; sequence VGPAESEPRSLPSSAHTEPTVD. Residues 197-208 show a composition bias toward polar residues; that stretch reads LPSSAHTEPTVD.

It belongs to the DP1 family.

Its subcellular location is the endoplasmic reticulum membrane. It is found in the cytoplasmic vesicle. The protein resides in the clathrin-coated vesicle membrane. Required correct function and survival of retinal photoreceptors. Required for retinal development. In rod photoreceptors, facilitates stability and/or trafficking of guanylate cyclases and is required to maintain endoplasmic reticulum and mitochondrial homeostasis. May play a role in clathrin-coated intracellular vesicle trafficking of proteins from the endoplasmic reticulum to the retinal rod plasma membrane. The polypeptide is Receptor expression-enhancing protein 6 (Danio rerio (Zebrafish)).